The chain runs to 460 residues: MARTVVALNILVLLGLCWSLAVANPLPAAHETVAKGENGTKPDSDVIEHCSDAWSFDATTMDHNGTMLFFKGEFVWRGHSGIRELISERWKNPVTSVDAAFRGPDSVFLIKEDKVWVYPPEKKENGYPKLFQEEFPGIPYPPDAAVECHRGECQSEGVLFFQGNRKWFWDFATRTQKERSWPAVGNCTAALRWLERYYCFQGNKFLRFNPVTGEVPPRYPLDARDYFISCPGRGHGKLRNGTAHGNSTHPMHSRCNADPGLSALLSDHRGATYAFSGSHYWRLDSSRDGWHSWPIAHHWPQGPSAVDAAFSWDEKVYLIQGTQVYVFLTKGGNNLVSGYPKRLEKELGSPPGISLDTIDAAFSCPGSSKLYVTSGRRLWWLDLKSGAQATWAELSWPHEKVDGALCLEKSLGPYSCSSNGPNLFFIHGPNLYCYSSIDKLNAAKSLPQPQKVNSILGCSQ.

A signal peptide spans Met1 to Ala23. N-linked (GlcNAc...) asparagine glycosylation is found at Asn38 and Asn64. Disulfide bonds link Cys50–Cys230, Cys148–Cys153, and Cys187–Cys199. Hemopexin repeat units lie at residues Ala53–Pro93, Val94–Ile138, Pro139–Ala183, and Val184–Cys230. His79 is a heme binding site. His149 serves as a coordination point for heme. N-linked (GlcNAc...) asparagine glycosylation is present at Asn186. A heme-binding site is contributed by His235. N-linked (GlcNAc...) asparagine glycosylation is found at Asn240 and Asn246. Cystine bridges form between Cys255/Cys458, Cys364/Cys406, and Cys416/Cys433. 4 Hemopexin repeats span residues Ala257–Gly302, Pro303–Pro350, Leu355–Leu394, and His398–Gln448. Residue His291 coordinates heme.

The protein belongs to the hemopexin family. Expressed by the liver and secreted in plasma.

It localises to the secreted. Functionally, binds heme and transports it to the liver for breakdown and iron recovery, after which the free hemopexin returns to the circulation. This is Hemopexin (Hpx) from Rattus norvegicus (Rat).